Consider the following 681-residue polypeptide: MRKVLYQKYRPTKFSDTVGQDSIKRIIVNAITQDQLPHGYIFAGERGTGKTTFAKIIAKAINCLNWNGDVCNQCEACQAINSNSAIDVFEIDAASKNGINDIRELAENVFNLPFKFKKKVYILDEAHMLTPQSWSGLLKTLEEAPDYVLFIFATTEFNKIPITILSRCQSFFFKQITNDLIQQRLAEVAAKESIKITTDALVKLADLAQGSLRDGLSLLDQISNFSESKTISLADVEKTFNLLDKEQKFGFIEAVLSGDLKQSFHLIDNFESQGINFVHFLRELFALTVDLYGYVKTGQIAVVKPSDQTMAAKLRFHPKQYALLVQAIEANTGYGPSQLSLSDQIKAIVIHYNNAVSKEPHIPAYTPVVQTQSPAKEHVPSKTVEEAKPQLPAKEPVLYKVIEEPKVSSFVKDPVASKLIEQPQTIVQPEAQQEITEVEQPTETSPAPATDLFGLAIKPEVVRKRGRRPLSVENTDFFQPAVKKLIQPVSKPAPIKLIEPSDNNPVSIPIKLNRAVIAVSVYGHNDPKLVAHFQQLLDSFKREFTQAEKTKDSSYLKQFSDKFTASDLSKVIKVLAASPFGLVLIFEDKEIATRLWKEALTEATAQATLLEIFQQNLFLSSFTLSEYETKVLAKVEQLTHKPQVLQLQQLEQLSSTVVKKAQKTAAQEIADTFFKGLYEEK.

44 to 51 (GERGTGKT) lines the ATP pocket. 4 residues coordinate Zn(2+): Cys63, Cys71, Cys74, and Cys77.

This sequence belongs to the DnaX/STICHEL family. As to quaternary structure, DNA polymerase III contains a core (composed of alpha, epsilon and theta chains) that associates with a tau subunit. This core dimerizes to form the POLIII' complex. PolIII' associates with the gamma complex (composed of gamma, delta, delta', psi and chi chains) and with the beta chain to form the complete DNA polymerase III complex.

It carries out the reaction DNA(n) + a 2'-deoxyribonucleoside 5'-triphosphate = DNA(n+1) + diphosphate. DNA polymerase III is a complex, multichain enzyme responsible for most of the replicative synthesis in bacteria. This DNA polymerase also exhibits 3' to 5' exonuclease activity. The protein is DNA polymerase III subunit gamma/tau (dnaX) of Mycoplasma pneumoniae (strain ATCC 29342 / M129 / Subtype 1) (Mycoplasmoides pneumoniae).